Consider the following 809-residue polypeptide: AP-3 complex subunit beta (809 aa).

HEAT repeat units follow at residues 37-76 (YYSQ…DDDS), 112-151 (DPNL…SSLA), 153-186 (IILH…AGKN), 187-224 (DYHE…DHLE), and 524-561 (KICP…YDID). 4 positions are modified to phosphoserine: Ser693, Ser698, Ser724, and Ser726. 2 disordered regions span residues 708–739 (FTSS…FTSQ) and 763–809 (PRKI…HLEL). The segment covering 722–739 (GDSNSISGKGNVNTFTSQ) has biased composition (polar residues). Over residues 772-791 (ESSDEDEDESEESSDDDEYS) the composition is skewed to acidic residues. Positions 792–809 (DSSLGTSSSGTSSSHLEL) are enriched in low complexity.

Belongs to the adaptor complexes large subunit family. As to quaternary structure, adaptor protein complex 3 (AP-3) is a heterotetramer composed of 2 large adaptins (APL5 and APL6), a medium adaptin (APM3) and a small adaptin (APS3). Post-translationally, pyrophosphorylated by 5-diphosphoinositol pentakisphosphate (5-IP7). Serine pyrophosphorylation is achieved by Mg(2+)-dependent, but enzyme independent transfer of a beta-phosphate from a inositol pyrophosphate to a pre-phosphorylated serine residue.

It is found in the golgi apparatus. The protein resides in the cytoplasmic vesicle. Its subcellular location is the clathrin-coated vesicle membrane. Its function is as follows. Part of the AP-3 complex, an adaptor-related complex which is not clathrin-associated. The complex is associated with the Golgi region as well as more peripheral structures. It facilitates the budding of vesicles from the Golgi membrane and may be directly involved in trafficking to the vacuole. Required for the transport via the ALP pathway, which directs the transport of the cargo proteins PHO8 and VAM3 to the vacuole. This is AP-3 complex subunit beta (APL6) from Saccharomyces cerevisiae (strain ATCC 204508 / S288c) (Baker's yeast).